The primary structure comprises 115 residues: Ig heavy chain V-III region W3082 (115 aa).

Positions 1-114 (EVKLEESGGG…WGQGTLVTVS (114 aa)) constitute an Ig-like domain. Residues Cys22 and Cys98 are joined by a disulfide bond.

This Mus musculus (Mouse) protein is Ig heavy chain V-III region W3082.